The chain runs to 62 residues: Large ribosomal subunit protein bL28 (62 aa).

It belongs to the bacterial ribosomal protein bL28 family.

The protein is Large ribosomal subunit protein bL28 of Onion yellows phytoplasma (strain OY-M).